The chain runs to 428 residues: Lysophosphatidic acid phosphatase type 6 (428 aa).

The N-terminal 32 residues, 1-32, are a transit peptide targeting the mitochondrion; that stretch reads MITGVFSMRLWTPVGVLTSLAYCLHQRRVALA. The substrate binding stretch occupies residues 58–168; sequence RHGARSPRKP…VFIRSTNIFR (111 aa). Residue H59 is the Nucleophile of the active site. The active-site Proton donor is the D335.

Belongs to the histidine acid phosphatase family. Monomer.

The protein resides in the mitochondrion. The catalysed reaction is a phosphate monoester + H2O = an alcohol + phosphate. It carries out the reaction 1-(9Z-octadecenoyl)-sn-glycero-3-phosphate + H2O = 1-(9Z-octadecenoyl)-sn-glycerol + phosphate. In terms of biological role, hydrolyzes lysophosphatidic acid (LPA) containing a medium length fatty acid chain to the corresponding monoacylglycerol. Has highest activity with lysophosphatidic acid containing myristate (C14:0), monounsaturated oleate (C18:1) or palmitate (C16:0), and lower activity with C18:0 and C6:0 lysophosphatidic acid. This is Lysophosphatidic acid phosphatase type 6 (ACP6) from Pongo abelii (Sumatran orangutan).